The chain runs to 73 residues: Small ribosomal subunit protein bS18 (73 aa).

The protein belongs to the bacterial ribosomal protein bS18 family. In terms of assembly, part of the 30S ribosomal subunit. Forms a tight heterodimer with protein bS6.

Binds as a heterodimer with protein bS6 to the central domain of the 16S rRNA, where it helps stabilize the platform of the 30S subunit. The chain is Small ribosomal subunit protein bS18 from Synechococcus sp. (strain WH7803).